Consider the following 325-residue polypeptide: Methionyl-tRNA formyltransferase (325 aa).

113-116 (SLLP) contributes to the (6S)-5,6,7,8-tetrahydrofolate binding site.

This sequence belongs to the Fmt family.

The catalysed reaction is L-methionyl-tRNA(fMet) + (6R)-10-formyltetrahydrofolate = N-formyl-L-methionyl-tRNA(fMet) + (6S)-5,6,7,8-tetrahydrofolate + H(+). In terms of biological role, attaches a formyl group to the free amino group of methionyl-tRNA(fMet). The formyl group appears to play a dual role in the initiator identity of N-formylmethionyl-tRNA by promoting its recognition by IF2 and preventing the misappropriation of this tRNA by the elongation apparatus. The chain is Methionyl-tRNA formyltransferase from Chromohalobacter salexigens (strain ATCC BAA-138 / DSM 3043 / CIP 106854 / NCIMB 13768 / 1H11).